The chain runs to 127 residues: uncharacterized protein (127 aa).

Residues 5–25 (ILGITIAFIILLLTTVAILFS) traverse the membrane as a helical segment.

It localises to the membrane. This is an uncharacterized protein from Mycoplasma genitalium (strain ATCC 33530 / DSM 19775 / NCTC 10195 / G37) (Mycoplasmoides genitalium).